A 559-amino-acid polypeptide reads, in one-letter code: Glucans biosynthesis protein G (559 aa).

Positions 1–37 (MVSLLSCGTSASSHIVKKALTRLSLAMAAGLCFNLAA) are cleaved as a signal peptide.

Belongs to the OpgD/OpgG family.

The protein localises to the periplasm. It functions in the pathway glycan metabolism; osmoregulated periplasmic glucan (OPG) biosynthesis. Functionally, involved in the biosynthesis of osmoregulated periplasmic glucans (OPGs). The sequence is that of Glucans biosynthesis protein G from Shewanella frigidimarina (strain NCIMB 400).